A 303-amino-acid polypeptide reads, in one-letter code: MQKFDTRTFQGLILTLQDYWARQGCTIVQPLDMEVGAGTSHPMTCLRALGPEPIAAAYVQPSRRPTDGRYGENPNRLQHYYQFQVIIKPSPDNIQELYLGSLKELGMDPTIHDIRFVEDNWENPTLGAWGLGWEVWLNGMEVTQFTYFQQVGGLECKPVTGEITYGLERLAMYIQGVDSVYDLVWSDGPLGKTTYGDVFHQNEVEQSTYNFEYADVDFLFTCFEQYEKEAQQLLALENPLPLPAYERILKAAHSFNLLDARKAISVTERQRYILRIRTLTKAVAEAYYASREALGFPMCNRNK.

The protein belongs to the class-II aminoacyl-tRNA synthetase family. As to quaternary structure, tetramer of two alpha and two beta subunits.

The protein localises to the cytoplasm. The catalysed reaction is tRNA(Gly) + glycine + ATP = glycyl-tRNA(Gly) + AMP + diphosphate. This is Glycine--tRNA ligase alpha subunit from Cronobacter sakazakii (strain ATCC BAA-894) (Enterobacter sakazakii).